A 306-amino-acid chain; its full sequence is Pantothenate kinase (306 aa).

ATP is bound at residue 91-98 (GSVAVGKS).

Belongs to the prokaryotic pantothenate kinase family.

Its subcellular location is the cytoplasm. The enzyme catalyses (R)-pantothenate + ATP = (R)-4'-phosphopantothenate + ADP + H(+). Its pathway is cofactor biosynthesis; coenzyme A biosynthesis; CoA from (R)-pantothenate: step 1/5. In Streptococcus thermophilus (strain CNRZ 1066), this protein is Pantothenate kinase.